We begin with the raw amino-acid sequence, 321 residues long: NADPH-dependent codeinone reductase 1-5 (321 aa).

2 residues coordinate NADPH: T27 and D51. Active-site proton donor residues include Y56 and H119. A substrate-binding site is contributed by H119. Residues Q187, S214, L216, S264, and R269 each contribute to the NADPH site.

Belongs to the aldo/keto reductase family. As to expression, latex secreting cells (laticifer cells). Expressed constitutively and ubiquitously with highest levels in capsules.

The protein resides in the cytoplasm. The protein localises to the cytosol. The catalysed reaction is codeine + NADP(+) = codeinone + NADPH + H(+). It catalyses the reaction neopine + NADP(+) = neopinone + NADPH + H(+). It carries out the reaction morphine + NADP(+) = morphinone + NADPH + H(+). The enzyme catalyses neomorphine + NADP(+) = neomorphinone + NADPH + H(+). The protein operates within alkaloid biosynthesis; morphine biosynthesis. NADPH-dependent codeinone reductase involved in biosynthesis of morphinan-type benzylisoquinoline and opiate alkaloids natural products. Reduces codeinone to codeine in the penultimate step in morphine biosynthesis. Can use morphinone, hydrocodone and hydromorphone as substrate during reductive reaction with NADPH as cofactor, and morphine and dihydrocodeine as substrate during oxidative reaction with NADP as cofactor. Converts morphinone to morphine, and neomorphinone to neomorphine. Reduces irreversibly neopinone, a spontaneous isomer of codeinone, to neopine; in planta, neopine levels are limited to low levels. This Papaver somniferum (Opium poppy) protein is NADPH-dependent codeinone reductase 1-5.